We begin with the raw amino-acid sequence, 230 residues long: Probable caffeoyl-CoA O-methyltransferase 1 (230 aa).

S-adenosyl-L-methionine is bound by residues T52, D74, 76–77 (GV), S82, D100, A129, D151, D153, and Y160. D151 is an a divalent metal cation binding site. Residues D177 and N178 each contribute to the a divalent metal cation site.

Belongs to the class I-like SAM-binding methyltransferase superfamily. Cation-dependent O-methyltransferase family. CCoAMT subfamily.

The catalysed reaction is (E)-caffeoyl-CoA + S-adenosyl-L-methionine = (E)-feruloyl-CoA + S-adenosyl-L-homocysteine + H(+). The sequence is that of Probable caffeoyl-CoA O-methyltransferase 1 (omt5) from Dictyostelium discoideum (Social amoeba).